A 202-amino-acid polypeptide reads, in one-letter code: Securin (202 aa).

Ala2 carries the N-acetylalanine modification. The disordered stretch occupies residues 35 to 90; it reads LDGRSQVSTPRFGKTFDAPPALPKATRKALGTVNRATEKSVKTKGPLKQKQPSFSA. A D-box motif is present at residues 61–64; the sequence is RKAL. 2 consecutive short sequence motifs (TEK-box) follow at residues 71–73 and 94–96; these read TEK. The short motif at 163 to 173 is the SH3-binding element; that stretch reads PPSPVKMPSPP. Phosphoserine; by CDK1 is present on Ser165.

Belongs to the securin family. Interacts with RPS10 and DNAJA1. Interacts with the caspase-like ESPL1, and prevents its protease activity probably by covering its active site. Interacts with TP53 and blocks its activity probably by blocking its binding to DNA. Interacts with the Ku 70 kDa subunit of ds-DNA kinase. Interacts with PTTG1IP. Phosphorylated at Ser-165 by CDK1 during mitosis. Post-translationally, phosphorylated in vitro by ds-DNA kinase. In terms of processing, ubiquitinated through 'Lys-11' linkage of ubiquitin moieties by the anaphase promoting complex (APC) at the onset of anaphase, conducting to its degradation. 'Lys-11'-linked ubiquitination is mediated by the E2 ligase UBE2C/UBCH10. In terms of tissue distribution, expressed at low level in most tissues, except in adult testis, where it is highly expressed. Overexpressed in many patients suffering from pituitary adenomas, primary epithelial neoplasias, and esophageal cancer.

The protein resides in the cytoplasm. The protein localises to the nucleus. Regulatory protein, which plays a central role in chromosome stability, in the p53/TP53 pathway, and DNA repair. Probably acts by blocking the action of key proteins. During the mitosis, it blocks Separase/ESPL1 function, preventing the proteolysis of the cohesin complex and the subsequent segregation of the chromosomes. At the onset of anaphase, it is ubiquitinated, conducting to its destruction and to the liberation of ESPL1. Its function is however not limited to a blocking activity, since it is required to activate ESPL1. Negatively regulates the transcriptional activity and related apoptosis activity of TP53. The negative regulation of TP53 may explain the strong transforming capability of the protein when it is overexpressed. May also play a role in DNA repair via its interaction with Ku, possibly by connecting DNA damage-response pathways with sister chromatid separation. The chain is Securin (PTTG1) from Homo sapiens (Human).